We begin with the raw amino-acid sequence, 326 residues long: uncharacterized protein (326 aa).

Position 28 to 35 (glycine 28 to threonine 35) interacts with ATP.

The protein belongs to the archaeal ATPase family.

This is an uncharacterized protein from Pyrococcus abyssi (strain GE5 / Orsay).